The following is a 61-amino-acid chain: MPNIFSLICICLNSALQPSGFFFAKLPEAYAFLNPIVDFMPVIPVLFFLLAFVWQAAVSFR.

Positions 1 to 24 are excised as a propeptide; the sequence is MPNIFSLICICLNSALQPSGFFFA. A helical transmembrane segment spans residues 36-56; it reads IVDFMPVIPVLFFLLAFVWQA.

The protein belongs to the PsbK family. In terms of assembly, PSII is composed of 1 copy each of membrane proteins PsbA, PsbB, PsbC, PsbD, PsbE, PsbF, PsbH, PsbI, PsbJ, PsbK, PsbL, PsbM, PsbT, PsbX, PsbY, PsbZ, Psb30/Ycf12, at least 3 peripheral proteins of the oxygen-evolving complex and a large number of cofactors. It forms dimeric complexes.

The protein localises to the plastid. It localises to the chloroplast thylakoid membrane. In terms of biological role, one of the components of the core complex of photosystem II (PSII). PSII is a light-driven water:plastoquinone oxidoreductase that uses light energy to abstract electrons from H(2)O, generating O(2) and a proton gradient subsequently used for ATP formation. It consists of a core antenna complex that captures photons, and an electron transfer chain that converts photonic excitation into a charge separation. This Nymphaea alba (White water-lily) protein is Photosystem II reaction center protein K.